Here is a 101-residue protein sequence, read N- to C-terminus: MEITEVRVFPVNEEKLKAYVTITLDHCFVIRDLKVIHGNTGLFIAMPAKRRKDGTFKDIAHPLNSDTREKMERTILAEYDRELKKGGAAPARATGTDPHED.

Positions 82–101 are disordered; sequence ELKKGGAAPARATGTDPHED.

Belongs to the SpoVG family.

Functionally, could be involved in septation. In Anaeromyxobacter dehalogenans (strain 2CP-1 / ATCC BAA-258), this protein is Putative septation protein SpoVG.